Reading from the N-terminus, the 1187-residue chain is Metabotropic glutamate receptor-like protein Q (1187 aa).

Over 1–735 (MRLFFKFFYL…TIETSNIAKT (735 aa)) the chain is Extracellular. N-linked (GlcNAc...) asparagine glycosylation is found at Asn-35, Asn-44, Asn-55, Asn-177, Asn-258, Asn-275, Asn-397, Asn-402, Asn-462, Asn-526, Asn-527, Asn-557, Asn-562, and Asn-684. Residues 736–756 (VMIITTSILVLLILLCFGITI) form a helical membrane-spanning segment. The Cytoplasmic segment spans residues 757–768 (AYSKEKVINFGN). Residues 769–789 (IVFLILMLFSCLFLCIIIYVS) form a helical membrane-spanning segment. Over 790 to 796 (IEPTNFS) the chain is Extracellular. An N-linked (GlcNAc...) asparagine glycan is attached at Asn-794. A helical transmembrane segment spans residues 797-817 (CQFSAIVFPIGIGILFTLTLL). Over 818–843 (KQYKIYKLFKYSDFLKINTDNLKMVK) the chain is Cytoplasmic. A helical transmembrane segment spans residues 844 to 864 (YAGLIMVPVFLLVLIGVIVYP). Residues 865-888 (SKPTFILDLHTKTATKYCISRKYY) are Extracellular-facing. The helical transmembrane segment at 889 to 909 (VFSIVIVVYEVIILLTSCFIA) threads the bilayer. Topologically, residues 910-925 (MKSKRYHSTPGTFYES) are cytoplasmic. The chain crosses the membrane as a helical span at residues 926-946 (LFNSILIYNYTLVFIVLIPLF). Topologically, residues 947–955 (YTLQNNPTT) are extracellular. The chain crosses the membrane as a helical span at residues 956 to 976 (IYLIYSIGSSILVFATLSIIF). At 977–1095 (IPKINFLFRR…SPSSQSIDFL (119 aa)) the chain is on the cytoplasmic side. Positions 1074–1105 (IYPNQIPKQTTNSPSSQSIDFLNNPTIPKNKS) are enriched in polar residues. The disordered stretch occupies residues 1074–1187 (IYPNQIPKQT…RKSMDPSLDS (114 aa)). The span at 1114–1124 (KKPKKKLKSKI) shows a compositional bias: basic residues. Low complexity predominate over residues 1125-1174 (ISKSANSSPNINNNTINNNNNNNNNNNNNNNNNNNNNNINNNNNNNININ).

It belongs to the G-protein coupled receptor 3 family. GABA-B receptor subfamily.

Its subcellular location is the membrane. This Dictyostelium discoideum (Social amoeba) protein is Metabotropic glutamate receptor-like protein Q (grlQ).